We begin with the raw amino-acid sequence, 156 residues long: Small ribosomal subunit protein uS7 (156 aa).

Belongs to the universal ribosomal protein uS7 family. As to quaternary structure, part of the 30S ribosomal subunit. Contacts proteins S9 and S11.

Functionally, one of the primary rRNA binding proteins, it binds directly to 16S rRNA where it nucleates assembly of the head domain of the 30S subunit. Is located at the subunit interface close to the decoding center, probably blocks exit of the E-site tRNA. The sequence is that of Small ribosomal subunit protein uS7 from Parasynechococcus marenigrum (strain WH8102).